The sequence spans 257 residues: Imidazole glycerol phosphate synthase subunit HisF (257 aa).

Active-site residues include aspartate 12 and aspartate 131.

Belongs to the HisA/HisF family. In terms of assembly, heterodimer of HisH and HisF.

It localises to the cytoplasm. The enzyme catalyses 5-[(5-phospho-1-deoxy-D-ribulos-1-ylimino)methylamino]-1-(5-phospho-beta-D-ribosyl)imidazole-4-carboxamide + L-glutamine = D-erythro-1-(imidazol-4-yl)glycerol 3-phosphate + 5-amino-1-(5-phospho-beta-D-ribosyl)imidazole-4-carboxamide + L-glutamate + H(+). Its pathway is amino-acid biosynthesis; L-histidine biosynthesis; L-histidine from 5-phospho-alpha-D-ribose 1-diphosphate: step 5/9. IGPS catalyzes the conversion of PRFAR and glutamine to IGP, AICAR and glutamate. The HisF subunit catalyzes the cyclization activity that produces IGP and AICAR from PRFAR using the ammonia provided by the HisH subunit. The chain is Imidazole glycerol phosphate synthase subunit HisF from Burkholderia ambifaria (strain MC40-6).